The sequence spans 186 residues: piRNA-mediated silencing protein C19orf84 (186 aa).

2 disordered regions span residues 1–42 and 89–186; these read MEQP…NSTD and SQAG…ETEY. Residues 13–22 are compositionally biased toward polar residues; the sequence is NNLSLPSSGT. Residues 24–36 are compositionally biased toward pro residues; it reads PWPPAPLPAPPPL. A compositionally biased stretch (basic residues) spans 114-126; it reads RPGWGRGLHRRGL. Positions 145–157 are enriched in pro residues; it reads RTPPMTLPSPPTL.

Interacts with SPOCD1.

The protein localises to the nucleus. It is found in the nucleoplasm. Protein adapter involved in piRNA-directed transposon methylation by connecting PIWIL4-piRNA and DNA methylation machineries. The PIWIL4-piRNA pathway plays a central role during spermatogenesis by directing transposon DNA methylation and silencing, thereby preventing their mobilization, which is essential for the germline integrity. In Homo sapiens (Human), this protein is piRNA-mediated silencing protein C19orf84.